The following is a 478-amino-acid chain: Serralysin C (478 aa).

Residues 1–17 (MEKNLSSRDDDALHSLS) constitute a propeptide that is removed on maturation. Histidine 187 provides a ligand contact to Zn(2+). Glutamate 188 is an active-site residue. The Zn(2+) site is built by histidine 191 and tyrosine 227. Ca(2+) is bound by residues arginine 264, glycine 266, aspartate 296, glycine 298, glycine 299, aspartate 301, threonine 338, glutamate 340, glycine 345, glycine 347, aspartate 349, asparagine 354, alanine 356, asparagine 358, glycine 362, glycine 363, alanine 364, glycine 365, aspartate 367, glycine 371, glycine 372, glycine 374, aspartate 376, glycine 380, glycine 381, glycine 383, aspartate 385, aspartate 394, aspartate 401, and aspartate 411. Hemolysin-type calcium-binding repeat units follow at residues 343–360 (IGGS…DNTL) and 361–378 (RGGA…ADRL).

Belongs to the peptidase M10B family. The cofactor is Ca(2+). Zn(2+) is required as a cofactor.

It is found in the secreted. It catalyses the reaction Preferential cleavage of bonds with hydrophobic residues in P1'.. The sequence is that of Serralysin C (prtC) from Dickeya chrysanthemi (Pectobacterium chrysanthemi).